We begin with the raw amino-acid sequence, 291 residues long: Pantothenate synthetase (291 aa).

Residue M30–H37 coordinates ATP. The active-site Proton donor is the H37. Position 61 (Q61) interacts with (R)-pantoate. Q61 provides a ligand contact to beta-alanine. Position 147 to 150 (G147 to D150) interacts with ATP. Residue Q153 coordinates (R)-pantoate. ATP is bound by residues V176 and L184–R187.

The protein belongs to the pantothenate synthetase family. As to quaternary structure, homodimer.

Its subcellular location is the cytoplasm. The catalysed reaction is (R)-pantoate + beta-alanine + ATP = (R)-pantothenate + AMP + diphosphate + H(+). The protein operates within cofactor biosynthesis; (R)-pantothenate biosynthesis; (R)-pantothenate from (R)-pantoate and beta-alanine: step 1/1. Catalyzes the condensation of pantoate with beta-alanine in an ATP-dependent reaction via a pantoyl-adenylate intermediate. The polypeptide is Pantothenate synthetase (Rhizobium rhizogenes (strain K84 / ATCC BAA-868) (Agrobacterium radiobacter)).